Consider the following 206-residue polypeptide: Protease (206 aa).

Residues H54, D71, and C122 contribute to the active site.

It belongs to the peptidase C5 family. Interacts with protease cofactor pVI-C; this interaction is necessary for protease activation.

It localises to the virion. Its subcellular location is the host nucleus. It catalyses the reaction Cleaves proteins of the adenovirus and its host cell at two consensus sites: -Yaa-Xaa-Gly-Gly-|-Xaa- and -Yaa-Xaa-Gly-Xaa-|-Gly- (in which Yaa is Met, Ile or Leu, and Xaa is any amino acid).. Requires DNA and protease cofactor for maximal activation. Inside nascent virions, becomes partially activated by binding to the viral DNA, allowing it to cleave the cofactor that binds to the protease and fully activates it. Actin, like the viral protease cofactor, seems to act as a cofactor in the cleavage of cytokeratin 18 and of actin itself. In terms of biological role, cleaves viral precursor proteins (pTP, pIIIa, pVI, pVII, pVIII, and pX) inside newly assembled particles giving rise to mature virions. Protease complexed to its cofactor slides along the viral DNA to specifically locate and cleave the viral precursors. Mature virions have a weakened organization compared to the unmature virions, thereby facilitating subsequent uncoating. Without maturation, the particle lacks infectivity and is unable to uncoat. Late in adenovirus infection, in the cytoplasm, may participate in the cytoskeleton destruction. Cleaves host cell cytoskeletal keratins K7 and K18. This is Protease from Homo sapiens (Human).